The sequence spans 349 residues: MKISLTSARQLARDILAAQQVPADIADDVAEHLVESDRCGYISHGLSILPNYRTALDGHSVNPQGRAKCVLDQGTLMVFDGDGGFGQHVGKSVMQAAIERVRQHGHCIVTLRRSHHLGRMGHYGEMAAAAGFVLLSFTNVINRAPVVAPFGGRVARLTTNPLCFAGPMPNGRPPLVVDIATSAIAINKARVLAEKGEPAPEGSIIGADGNPTTDASTMFGEHPGALLPFGGHKGYALGVVAELLAGVLSGGGTIQPDNPRGGVATNNLFAVLLNPALDLGLDWQSAEVEAFVRYLHDTPPAPGVDRVQYPGEYEAANRAQASDTLNINPAIWRNLERLAQSLNVAVPTA.

A disordered region spans residues 199-219; it reads APEGSIIGADGNPTTDASTMF.

Belongs to the LDH2/MDH2 oxidoreductase family.

The protein resides in the cytoplasm. It catalyses the reaction (S)-lactate + NAD(+) = pyruvate + NADH + H(+). Its pathway is fermentation; pyruvate fermentation to lactate; (S)-lactate from pyruvate: step 1/1. The chain is L-lactate dehydrogenase (ldh) from Cupriavidus necator (strain ATCC 17699 / DSM 428 / KCTC 22496 / NCIMB 10442 / H16 / Stanier 337) (Ralstonia eutropha).